A 296-amino-acid chain; its full sequence is MARYRNKVSCPAQCDPKLQSTGDTSWDSYATTMKTAFTPKRGMVPDLIRPKSTRRLGFTYSIGDPILNESQYHDEYTWKLRSKENMVKTGTSRGVWNHKTHPGQEFFQWTHPKGKQTQKLPWIEPPSEESIQNAVASQFISCTKRDFVDLTQSKKTMKRFPRSQDRKSLLPRPLDTEFRYNYQIPAQIPELKDFSFKYGCYASLPVASQGLVPSVLSSYIRNEERTKKQTTYECDYGKACLDFLTILDSFTPSQVHDYLQSVSYKDRQILERFIHSHCDIEAKPNKREKQSHRKRP.

5 mn regions span residues 30 to 42, 69 to 83, 140 to 153, 175 to 189, and 229 to 243; these read ATTM…PKRG, ESQY…LRSK, ISCT…LTQS, DTEF…AQIP, and QTTY…CLDF.

This is Testis-expressed protein 26 (Tex26) from Mus musculus (Mouse).